The primary structure comprises 190 residues: Large ribosomal subunit protein bL25 (190 aa).

This sequence belongs to the bacterial ribosomal protein bL25 family. CTC subfamily. In terms of assembly, part of the 50S ribosomal subunit; part of the 5S rRNA/L5/L18/L25 subcomplex. Contacts the 5S rRNA. Binds to the 5S rRNA independently of L5 and L18.

Functionally, this is one of the proteins that binds to the 5S RNA in the ribosome where it forms part of the central protuberance. The protein is Large ribosomal subunit protein bL25 of Neisseria gonorrhoeae (strain ATCC 700825 / FA 1090).